Here is a 456-residue protein sequence, read N- to C-terminus: Probable glycine dehydrogenase (decarboxylating) subunit 1 (456 aa).

Belongs to the GcvP family. N-terminal subunit subfamily. In terms of assembly, the glycine cleavage system is composed of four proteins: P, T, L and H. In this organism, the P 'protein' is a heterodimer of two subunits.

The catalysed reaction is N(6)-[(R)-lipoyl]-L-lysyl-[glycine-cleavage complex H protein] + glycine + H(+) = N(6)-[(R)-S(8)-aminomethyldihydrolipoyl]-L-lysyl-[glycine-cleavage complex H protein] + CO2. Functionally, the glycine cleavage system catalyzes the degradation of glycine. The P protein binds the alpha-amino group of glycine through its pyridoxal phosphate cofactor; CO(2) is released and the remaining methylamine moiety is then transferred to the lipoamide cofactor of the H protein. The chain is Probable glycine dehydrogenase (decarboxylating) subunit 1 from Legionella pneumophila (strain Paris).